The primary structure comprises 301 residues: MTRMAEKPISPTKTRTRFEDIQAHYDVSDDFFALFQDPTRTYSCAYFEPPELTLEEAQYAKVDLNLDKLDLKPGMTLLDIGCGWGTTMRRAVERLDVNVIGLTLSKNQHARCEQVLASIDTNRSRQVLLQGWEDFAEPVDRIVSIEAFEHFGHENYDDFFKRCFNIMPADGRMTVQSSVSYHPYEMAARGKKLSFETARFIKFIVTEIFPGGRLPSTEMMVEHGEKAGFTVPEPLSLRPHYIKTLRIWGDTLQSNKDKAIEVTSEEVYNRYMKYLRGCEHYFTDEMLDCSLVTYLKPGAAA.

Residues 42–43 (YS), 81–83 (GCG), 103–108 (TLSKNQ), 132–133 (WE), and Ile-145 contribute to the S-adenosyl-L-methionine site. Residue Cys-278 is part of the active site.

Belongs to the CFA/CMAS family. In terms of assembly, monomer.

It participates in lipid metabolism; mycolic acid biosynthesis. Its function is as follows. Involved in the biosynthesis of hydroxymycolate, a common precursor of oxygenated mycolic acids (methoxymycolate and ketomycolate). Probably transfers a methyl group from the S-adenosylmethionine (SAM) cofactor and, subsequently or simultaneously, a water molecule onto the double bound of ethylene substrates, leading to the formation of the hydroxylated product at the distal position. This is Hydroxymycolate synthase MmaA4 (cmaA) from Mycobacterium bovis (strain ATCC BAA-935 / AF2122/97).